A 156-amino-acid polypeptide reads, in one-letter code: NADH-ubiquinone oxidoreductase 20 kDa subunit (156 aa).

The [4Fe-4S] cluster site is built by cysteine 33, cysteine 34, cysteine 98, and cysteine 128.

Belongs to the complex I 20 kDa subunit family. [4Fe-4S] cluster is required as a cofactor.

It localises to the mitochondrion. The catalysed reaction is a ubiquinone + NADH + 5 H(+)(in) = a ubiquinol + NAD(+) + 4 H(+)(out). The protein is NADH-ubiquinone oxidoreductase 20 kDa subunit (NAD10) of Paramecium tetraurelia.